The following is a 373-amino-acid chain: MSFEKLGEDGKARRGRLTFPRGVVETPAFMPVGTYGTVKGMLPRDIEEIGAHIILGNTFHLMLRPGTEVVKAHGDLHDFTQWQGPILTDSGGFQVFSLGEMRKITEQGVTFRSPVDGSKVELSPEIAIQVQRDLGSDIVMIFDECTPYPATEKQAKESMELSLRWAERSKRAHEGNPAALFGIVQGGMYESLRDQSLEGLEKIGFDGYAIGGLSVGEPKEDMIRILDHLPPKMPEDKPRYLMGVGRPEDIVEAVRRGVDMFDCVMPTRNARNGYLFTSAGIVKIRNAKNRHDTGPLDERCDCYTCKHFSKSYLHHLDKCGEMLGSQLNTIHNLRFYQNLMSGLRGAIEAGTLSDFVSEFYALRGETVPPLGDS.

The active-site Proton acceptor is Asp89. Residues 89–93 (DSGGF), Asp143, Gln185, and Gly212 contribute to the substrate site. Positions 243-249 (GVGRPED) are RNA binding. Residue Asp262 is the Nucleophile of the active site. The interval 267-271 (TRNAR) is RNA binding; important for wobble base 34 recognition. Residues Cys300, Cys302, Cys305, and His331 each coordinate Zn(2+).

It belongs to the queuine tRNA-ribosyltransferase family. As to quaternary structure, homodimer. Within each dimer, one monomer is responsible for RNA recognition and catalysis, while the other monomer binds to the replacement base PreQ1. Zn(2+) is required as a cofactor.

It catalyses the reaction 7-aminomethyl-7-carbaguanine + guanosine(34) in tRNA = 7-aminomethyl-7-carbaguanosine(34) in tRNA + guanine. It functions in the pathway tRNA modification; tRNA-queuosine biosynthesis. Its function is as follows. Catalyzes the base-exchange of a guanine (G) residue with the queuine precursor 7-aminomethyl-7-deazaguanine (PreQ1) at position 34 (anticodon wobble position) in tRNAs with GU(N) anticodons (tRNA-Asp, -Asn, -His and -Tyr). Catalysis occurs through a double-displacement mechanism. The nucleophile active site attacks the C1' of nucleotide 34 to detach the guanine base from the RNA, forming a covalent enzyme-RNA intermediate. The proton acceptor active site deprotonates the incoming PreQ1, allowing a nucleophilic attack on the C1' of the ribose to form the product. After dissociation, two additional enzymatic reactions on the tRNA convert PreQ1 to queuine (Q), resulting in the hypermodified nucleoside queuosine (7-(((4,5-cis-dihydroxy-2-cyclopenten-1-yl)amino)methyl)-7-deazaguanosine). The polypeptide is Queuine tRNA-ribosyltransferase (Marinobacter nauticus (strain ATCC 700491 / DSM 11845 / VT8) (Marinobacter aquaeolei)).